A 319-amino-acid chain; its full sequence is ATP-dependent 6-phosphofructokinase (319 aa).

Position 11 (G11) interacts with ATP. 21–25 (RAVVR) serves as a coordination point for ADP. ATP is bound by residues 72–73 (RS) and 102–105 (GDGS). D103 contacts Mg(2+). 125 to 127 (TID) contributes to the substrate binding site. The active-site Proton acceptor is D127. R154 is an ADP binding site. Residues R162 and 169–171 (MGR) each bind substrate. Residues 185–187 (GAE), R211, and 213–215 (KKH) each bind ADP. Substrate-binding positions include E222, R243, and 249–252 (HIQR).

This sequence belongs to the phosphofructokinase type A (PFKA) family. ATP-dependent PFK group I subfamily. Prokaryotic clade 'B1' sub-subfamily. As to quaternary structure, homotetramer. Mg(2+) is required as a cofactor.

The protein localises to the cytoplasm. The enzyme catalyses beta-D-fructose 6-phosphate + ATP = beta-D-fructose 1,6-bisphosphate + ADP + H(+). Its pathway is carbohydrate degradation; glycolysis; D-glyceraldehyde 3-phosphate and glycerone phosphate from D-glucose: step 3/4. With respect to regulation, allosterically activated by ADP and other diphosphonucleosides, and allosterically inhibited by phosphoenolpyruvate. In terms of biological role, catalyzes the phosphorylation of D-fructose 6-phosphate to fructose 1,6-bisphosphate by ATP, the first committing step of glycolysis. This is ATP-dependent 6-phosphofructokinase from Oceanobacillus iheyensis (strain DSM 14371 / CIP 107618 / JCM 11309 / KCTC 3954 / HTE831).